The primary structure comprises 507 residues: ATP synthase subunit alpha (507 aa).

The segment at valine 118 to aspartate 141 is disordered. Glycine 172–threonine 179 lines the ATP pocket.

It belongs to the ATPase alpha/beta chains family. In terms of assembly, F-type ATPases have 2 components, CF(1) - the catalytic core - and CF(0) - the membrane proton channel. CF(1) has five subunits: alpha(3), beta(3), gamma(1), delta(1), epsilon(1). CF(0) has three main subunits: a(1), b(2) and c(9-12). The alpha and beta chains form an alternating ring which encloses part of the gamma chain. CF(1) is attached to CF(0) by a central stalk formed by the gamma and epsilon chains, while a peripheral stalk is formed by the delta and b chains.

The protein resides in the cell membrane. The enzyme catalyses ATP + H2O + 4 H(+)(in) = ADP + phosphate + 5 H(+)(out). In terms of biological role, produces ATP from ADP in the presence of a proton gradient across the membrane. The alpha chain is a regulatory subunit. In Anoxybacillus flavithermus (strain DSM 21510 / WK1), this protein is ATP synthase subunit alpha.